Consider the following 212-residue polypeptide: Nitrile hydratase subunit beta (212 aa).

It belongs to the nitrile hydratase subunit beta family. In terms of assembly, heterodimer of an alpha and a beta chain.

It carries out the reaction an aliphatic primary amide = an aliphatic nitrile + H2O. Functionally, NHase catalyzes the hydration of various nitrile compounds to the corresponding amides. The protein is Nitrile hydratase subunit beta (nthB) of Rhodococcus erythropolis (Arthrobacter picolinophilus).